The chain runs to 107 residues: Large ribosomal subunit protein P2 (107 aa).

A disordered region spans residues 86–107; the sequence is PAAAAAEAEEEDDDDMGFGLFD. Residues 92-101 show a composition bias toward acidic residues; sequence EAEEEDDDDM.

This sequence belongs to the eukaryotic ribosomal protein P1/P2 family. In terms of assembly, P1 and P2 exist as dimers at the large ribosomal subunit. In terms of processing, phosphorylated.

In terms of biological role, plays an important role in the elongation step of protein synthesis. The chain is Large ribosomal subunit protein P2 from Trypanosoma brucei brucei.